Reading from the N-terminus, the 104-residue chain is Phosphoribosyl-ATP pyrophosphatase (104 aa).

The protein belongs to the PRA-PH family.

It is found in the cytoplasm. The enzyme catalyses 1-(5-phospho-beta-D-ribosyl)-ATP + H2O = 1-(5-phospho-beta-D-ribosyl)-5'-AMP + diphosphate + H(+). It functions in the pathway amino-acid biosynthesis; L-histidine biosynthesis; L-histidine from 5-phospho-alpha-D-ribose 1-diphosphate: step 2/9. This Erythrobacter litoralis (strain HTCC2594) protein is Phosphoribosyl-ATP pyrophosphatase.